A 95-amino-acid polypeptide reads, in one-letter code: Aspartyl/glutamyl-tRNA(Asn/Gln) amidotransferase subunit C (95 aa).

It belongs to the GatC family. In terms of assembly, heterotrimer of A, B and C subunits.

The enzyme catalyses L-glutamyl-tRNA(Gln) + L-glutamine + ATP + H2O = L-glutaminyl-tRNA(Gln) + L-glutamate + ADP + phosphate + H(+). It catalyses the reaction L-aspartyl-tRNA(Asn) + L-glutamine + ATP + H2O = L-asparaginyl-tRNA(Asn) + L-glutamate + ADP + phosphate + 2 H(+). In terms of biological role, allows the formation of correctly charged Asn-tRNA(Asn) or Gln-tRNA(Gln) through the transamidation of misacylated Asp-tRNA(Asn) or Glu-tRNA(Gln) in organisms which lack either or both of asparaginyl-tRNA or glutaminyl-tRNA synthetases. The reaction takes place in the presence of glutamine and ATP through an activated phospho-Asp-tRNA(Asn) or phospho-Glu-tRNA(Gln). The chain is Aspartyl/glutamyl-tRNA(Asn/Gln) amidotransferase subunit C from Pseudomonas putida (strain W619).